The primary structure comprises 287 residues: Polyamine aminopropyltransferase (287 aa).

Residues 5 to 238 enclose the PABS domain; the sequence is EIWYETLHAN…GIMTFAWASN (234 aa). Q33 serves as a coordination point for S-methyl-5'-thioadenosine. Spermidine contacts are provided by H64 and D88. S-methyl-5'-thioadenosine contacts are provided by residues E108 and 140–141; that span reads DG. Catalysis depends on D158, which acts as the Proton acceptor. Spermidine is bound at residue 158–161; sequence DCTD. P165 contacts S-methyl-5'-thioadenosine.

The protein belongs to the spermidine/spermine synthase family. In terms of assembly, homodimer or homotetramer.

The protein resides in the cytoplasm. It catalyses the reaction S-adenosyl 3-(methylsulfanyl)propylamine + putrescine = S-methyl-5'-thioadenosine + spermidine + H(+). The protein operates within amine and polyamine biosynthesis; spermidine biosynthesis; spermidine from putrescine: step 1/1. Functionally, catalyzes the irreversible transfer of a propylamine group from the amino donor S-adenosylmethioninamine (decarboxy-AdoMet) to putrescine (1,4-diaminobutane) to yield spermidine. This chain is Polyamine aminopropyltransferase, found in Pectobacterium atrosepticum (strain SCRI 1043 / ATCC BAA-672) (Erwinia carotovora subsp. atroseptica).